The sequence spans 413 residues: Phosphopentomutase (413 aa).

Positions 11, 306, 311, 347, 348, and 359 each coordinate Mn(2+).

Belongs to the phosphopentomutase family. Mn(2+) is required as a cofactor.

Its subcellular location is the cytoplasm. The catalysed reaction is 2-deoxy-alpha-D-ribose 1-phosphate = 2-deoxy-D-ribose 5-phosphate. It catalyses the reaction alpha-D-ribose 1-phosphate = D-ribose 5-phosphate. It functions in the pathway carbohydrate degradation; 2-deoxy-D-ribose 1-phosphate degradation; D-glyceraldehyde 3-phosphate and acetaldehyde from 2-deoxy-alpha-D-ribose 1-phosphate: step 1/2. Its function is as follows. Isomerase that catalyzes the conversion of deoxy-ribose 1-phosphate (dRib-1-P) and ribose 1-phosphate (Rib-1-P) to deoxy-ribose 5-phosphate (dRib-5-P) and ribose 5-phosphate (Rib-5-P), respectively. In Helicobacter pylori (strain G27), this protein is Phosphopentomutase.